The sequence spans 462 residues: tRNA modification GTPase MnmE (462 aa).

3 residues coordinate (6S)-5-formyl-5,6,7,8-tetrahydrofolate: arginine 22, glutamate 87, and arginine 126. One can recognise a TrmE-type G domain in the interval 220–382; that stretch reads GLKVAIVGRP…LARKVQEIVL (163 aa). Asparagine 230 contributes to the K(+) binding site. Residues 230-235, 249-255, and 274-277 each bind GTP; these read NVGKSS, SNIPGTT, and DTAG. Serine 234 is a Mg(2+) binding site. Residues serine 249, isoleucine 251, and threonine 254 each contribute to the K(+) site. Position 255 (threonine 255) interacts with Mg(2+). A (6S)-5-formyl-5,6,7,8-tetrahydrofolate-binding site is contributed by lysine 462.

Belongs to the TRAFAC class TrmE-Era-EngA-EngB-Septin-like GTPase superfamily. TrmE GTPase family. In terms of assembly, homodimer. Heterotetramer of two MnmE and two MnmG subunits. K(+) serves as cofactor.

It is found in the cytoplasm. Its function is as follows. Exhibits a very high intrinsic GTPase hydrolysis rate. Involved in the addition of a carboxymethylaminomethyl (cmnm) group at the wobble position (U34) of certain tRNAs, forming tRNA-cmnm(5)s(2)U34. This chain is tRNA modification GTPase MnmE, found in Moorella thermoacetica (strain ATCC 39073 / JCM 9320).